A 413-amino-acid chain; its full sequence is Gamma-glutamyl phosphate reductase (413 aa).

This sequence belongs to the gamma-glutamyl phosphate reductase family.

The protein localises to the cytoplasm. The enzyme catalyses L-glutamate 5-semialdehyde + phosphate + NADP(+) = L-glutamyl 5-phosphate + NADPH + H(+). The protein operates within amino-acid biosynthesis; L-proline biosynthesis; L-glutamate 5-semialdehyde from L-glutamate: step 2/2. In terms of biological role, catalyzes the NADPH-dependent reduction of L-glutamate 5-phosphate into L-glutamate 5-semialdehyde and phosphate. The product spontaneously undergoes cyclization to form 1-pyrroline-5-carboxylate. The chain is Gamma-glutamyl phosphate reductase from Leuconostoc mesenteroides subsp. mesenteroides (strain ATCC 8293 / DSM 20343 / BCRC 11652 / CCM 1803 / JCM 6124 / NCDO 523 / NBRC 100496 / NCIMB 8023 / NCTC 12954 / NRRL B-1118 / 37Y).